The following is a 66-amino-acid chain: uncharacterized protein (66 aa).

Positions 1 to 18 (MSTTSSSSTFSTRTASLS) are enriched in low complexity. Residues 1–22 (MSTTSSSSTFSTRTASLSQSYT) are disordered.

This is an uncharacterized protein from Schizosaccharomyces pombe (strain 972 / ATCC 24843) (Fission yeast).